The chain runs to 99 residues: A-type ATP synthase subunit F (99 aa).

Belongs to the V-ATPase F subunit family. As to quaternary structure, has multiple subunits with at least A(3), B(3), C, D, E, F, H, I and proteolipid K(x).

The protein resides in the cell membrane. In terms of biological role, component of the A-type ATP synthase that produces ATP from ADP in the presence of a proton gradient across the membrane. The protein is A-type ATP synthase subunit F of Methanococcus maripaludis (strain DSM 14266 / JCM 13030 / NBRC 101832 / S2 / LL).